The sequence spans 354 residues: S-adenosylmethionine:tRNA ribosyltransferase-isomerase (354 aa).

This sequence belongs to the QueA family. As to quaternary structure, monomer.

The protein localises to the cytoplasm. It catalyses the reaction 7-aminomethyl-7-carbaguanosine(34) in tRNA + S-adenosyl-L-methionine = epoxyqueuosine(34) in tRNA + adenine + L-methionine + 2 H(+). It participates in tRNA modification; tRNA-queuosine biosynthesis. Its function is as follows. Transfers and isomerizes the ribose moiety from AdoMet to the 7-aminomethyl group of 7-deazaguanine (preQ1-tRNA) to give epoxyqueuosine (oQ-tRNA). This chain is S-adenosylmethionine:tRNA ribosyltransferase-isomerase, found in Pseudomonas syringae pv. syringae (strain B728a).